We begin with the raw amino-acid sequence, 191 residues long: MKVKSILSEGKQIQLATELVRLGARLQVLEVSTTLSRERLVKLYKEVKGVSPPKGMLPYSEDWFTGWQPNMHSSLFINIYNYITQYTNVRDIDAIIKSYQLYLEHIEVNHLQCILSFTRAWTLVRFVESKVLSVTSCVKCTGNFLVHSLDIQSNHVCGLCHVPSRAGKTKRAAAQKAKEAQEVEIREACAV.

Residues cysteine 137, cysteine 140, cysteine 157, and cysteine 160 each coordinate Zn(2+).

The protein belongs to the FlhC family. As to quaternary structure, heterohexamer composed of two FlhC and four FlhD subunits. Each FlhC binds a FlhD dimer, forming a heterotrimer, and a hexamer assembles by dimerization of two heterotrimers. It depends on Zn(2+) as a cofactor.

The protein resides in the cytoplasm. Functionally, functions in complex with FlhD as a master transcriptional regulator that regulates transcription of several flagellar and non-flagellar operons by binding to their promoter region. Activates expression of class 2 flagellar genes, including fliA, which is a flagellum-specific sigma factor that turns on the class 3 genes. Also regulates genes whose products function in a variety of physiological pathways. In Nitrosomonas eutropha (strain DSM 101675 / C91 / Nm57), this protein is Flagellar transcriptional regulator FlhC.